A 697-amino-acid chain; its full sequence is uncharacterized protein (697 aa).

The zn(2)-C6 fungal-type DNA-binding region spans 24–51; sequence CIRCRQKKIKCSGEKPSCQACSNNKVEC. A helical membrane pass occupies residues 500-520; the sequence is YIMSPFVGFSILTAATIHMLL.

It is found in the nucleus membrane. This is an uncharacterized protein from Schizosaccharomyces pombe (strain 972 / ATCC 24843) (Fission yeast).